The sequence spans 294 residues: Phosphoprotein (294 aa).

Positions 12–28 are binding to monomeric RNA-free nucleoprotein; the sequence is MGNEAAKAAEAFQRSLK. Positions 52-97 are disordered; the sequence is KPTISKSTKVTTPPERRNAWGEKPDTTRNQTEEARNEATLEDTSRL. Over residues 65 to 97 the composition is skewed to basic and acidic residues; that stretch reads PERRNAWGEKPDTTRNQTEEARNEATLEDTSRL. Ser106 is modified (phosphoserine). A binding to host phosphatase PP1 region spans residues 123–128; sequence KKKVTF. Positions 135–157 are binding to protein M2-1; the sequence is RYTKLEMEALELLSDNEDDDAES. Phosphoserine is present on residues Ser148, Ser157, Ser158, Ser168, and Ser171. The segment at 169 to 194 is oligomerization and binding to RNA-directed RNA polymerase L; the sequence is ALSLEARLESIDEKLSMILGLLRTLN. Residues 234-294 are disordered; that stretch reads MKEEAKQKSK…PDDDLYSLTM (61 aa). Residues 251–279 are binding to RNA-directed RNA polymerase L; sequence LTEKAKELNKIVEDESTSGESEEEEEEED. Positions 253–263 are enriched in basic and acidic residues; sequence EKAKELNKIVE. Positions 264–294 are enriched in acidic residues; it reads DESTSGESEEEEEEEDEEESNPDDDLYSLTM. The binding to the N-RNA complex stretch occupies residues 281 to 294; it reads EESNPDDDLYSLTM.

Belongs to the pneumoviridae phosphoprotein P family. In terms of assembly, homotetramer. Interacts with protein M2-1; the interaction between the two tetramers is required for the anti-termination and elongation transcriptional activities of protein M2-1. Interacts with host phosphatase PP1; this interaction recruits PP1 to the inclusion bodies. Formation of a complex PP1/M2-1/P allows P to target host PP1 phosphatase to the M2-1 substrate. Interacts with the nucleoprotein N; the phosphorylated phosphoprotein P binds to N-RNA complex. Interacts with the monomeric RNA-free nucleoprotein N. Interacts with RNA-directed RNA polymerase L (via N-terminus); the association of P and L forms the polymerase complex. Constitutively phosphorylated by host.

Its subcellular location is the virion. The protein resides in the host cytoplasm. In terms of biological role, plays critical roles in regulating RNA replication and transcription through its interactions with multiple proteins. Tethers the RNA-directed RNA polymerase L to the nucleoprotein-RNA complex. Recruits the M2-1 protein, a processivity factor that is required for efficient transcription of viral RNA. Acts as a chaperone for neo-synthesized nucleoprotein by forming an N-P complex that preserves N in a monomeric and RNA-free state and prevents the association of nascent N with host cell RNAs. Recruits the host phosphatase PP1 to inclusion bodies to regulate viral transcription. This Avian metapneumovirus (isolate Canada goose/Minnesota/15a/2001) (AMPV) protein is Phosphoprotein.